Here is a 186-residue protein sequence, read N- to C-terminus: Protein GrpE (186 aa).

A compositionally biased stretch (polar residues) spans 1–15; that stretch reads MADEQQTLDQQTPEQ. A disordered region spans residues 1-20; the sequence is MADEQQTLDQQTPEQPTGAA.

The protein belongs to the GrpE family. In terms of assembly, homodimer.

Its subcellular location is the cytoplasm. Its function is as follows. Participates actively in the response to hyperosmotic and heat shock by preventing the aggregation of stress-denatured proteins, in association with DnaK and GrpE. It is the nucleotide exchange factor for DnaK and may function as a thermosensor. Unfolded proteins bind initially to DnaJ; upon interaction with the DnaJ-bound protein, DnaK hydrolyzes its bound ATP, resulting in the formation of a stable complex. GrpE releases ADP from DnaK; ATP binding to DnaK triggers the release of the substrate protein, thus completing the reaction cycle. Several rounds of ATP-dependent interactions between DnaJ, DnaK and GrpE are required for fully efficient folding. The protein is Protein GrpE of Pseudomonas aeruginosa (strain LESB58).